We begin with the raw amino-acid sequence, 399 residues long: Probable protein phosphatase 2C 28 (399 aa).

Residues 48–356 (EFSMAVVQAN…DDITVIVVFL (309 aa)) enclose the PPM-type phosphatase domain. Mn(2+) is bound by residues Asp87, Gly88, Asp288, and Asp347.

Belongs to the PP2C family. Mg(2+) is required as a cofactor. The cofactor is Mn(2+).

It carries out the reaction O-phospho-L-seryl-[protein] + H2O = L-seryl-[protein] + phosphate. The enzyme catalyses O-phospho-L-threonyl-[protein] + H2O = L-threonyl-[protein] + phosphate. The chain is Probable protein phosphatase 2C 28 from Oryza sativa subsp. japonica (Rice).